The primary structure comprises 421 residues: Tyrosine-protein phosphatase non-receptor type 20 (421 aa).

A disordered region spans residues 1 to 58; sequence MSSPGNVRQKHGRDNDEHEGDSDDLNLQKSLPSSSQQKTPTKPVFGNKVNSESVKTSH. Residues 27–41 are compositionally biased toward low complexity; the sequence is LQKSLPSSSQQKTPT. Positions 48-58 are enriched in polar residues; sequence KVNSESVKTSH. S76 carries the post-translational modification Phosphoserine. The segment at 93–116 is disordered; that stretch reads RWSSVDPESAGPSKTVSTVLSESS. The segment covering 104–116 has biased composition (polar residues); it reads PSKTVSTVLSESS. At S122 the chain carries Phosphoserine. The 254-residue stretch at 160–413 folds into the Tyrosine-protein phosphatase domain; that stretch reads IIREFLELEE…QFCYEIVLEV (254 aa). Residues D324, 354-360, and Q398 contribute to the substrate site; that span reads CSAGVGR. C354 serves as the catalytic Phosphocysteine intermediate.

This sequence belongs to the protein-tyrosine phosphatase family. Non-receptor class subfamily.

The protein localises to the nucleus. Its subcellular location is the cytoplasm. The protein resides in the cytoskeleton. It localises to the microtubule organizing center. It is found in the centrosome. It carries out the reaction O-phospho-L-tyrosyl-[protein] + H2O = L-tyrosyl-[protein] + phosphate. Its function is as follows. Tyrosine-protein phosphatase targeted to sites of actin polymerization in response of varied extracellular stimuli. Has tyrosine phosphatase activity towards various tyrosyl phosphorylated substrates. The protein is Tyrosine-protein phosphatase non-receptor type 20 (Ptpn20) of Rattus norvegicus (Rat).